Consider the following 330-residue polypeptide: Aspartate--ammonia ligase (330 aa).

This sequence belongs to the class-II aminoacyl-tRNA synthetase family. AsnA subfamily.

It is found in the cytoplasm. It carries out the reaction L-aspartate + NH4(+) + ATP = L-asparagine + AMP + diphosphate + H(+). It functions in the pathway amino-acid biosynthesis; L-asparagine biosynthesis; L-asparagine from L-aspartate (ammonia route): step 1/1. This chain is Aspartate--ammonia ligase, found in Mannheimia succiniciproducens (strain KCTC 0769BP / MBEL55E).